Consider the following 230-residue polypeptide: Endonuclease NucS (230 aa).

It belongs to the NucS endonuclease family.

Its subcellular location is the cytoplasm. Functionally, cleaves both 3' and 5' ssDNA extremities of branched DNA structures. In Corynebacterium glutamicum (strain R), this protein is Endonuclease NucS.